The sequence spans 506 residues: Maturase K (506 aa).

Belongs to the intron maturase 2 family. MatK subfamily.

Its subcellular location is the plastid. It localises to the chloroplast. Usually encoded in the trnK tRNA gene intron. Probably assists in splicing its own and other chloroplast group II introns. This is Maturase K from Prunus dulcis (Almond).